The primary structure comprises 231 residues: Triggering receptor expressed on myeloid cells 1 (231 aa).

Residues 1–20 form the signal peptide; sequence MRKTRLWGLLWMFFVSELLA. At 21 to 202 the chain is on the extracellular side; sequence ATKLTEEKYE…TDIIRVPVFN (182 aa). The region spanning 26–131 is the Ig-like V-type domain; sequence EEKYELKEGQ…LFDRIRLVVT (106 aa). A disulfide bridge connects residues Cys41 and Cys110. Polar residues-rich tracts occupy residues 134-157 and 164-182; these read SSGT…TTTK and TSPT…DVST. The tract at residues 134–182 is disordered; the sequence is SSGTPGSSENSTPNVYKTPPTTTKALRPLYTSPTTVTQAPPKSTADVST. 2 N-linked (GlcNAc...) asparagine glycosylation sites follow: Asn188 and Asn191. The helical transmembrane segment at 203–223 threads the bilayer; it reads IAILVAGGFLSKSLVFSVLFA. Residues 224–231 lie on the Cytoplasmic side of the membrane; sequence VTLRSFVP.

In terms of assembly, monomer. Homomultimer; when activated. Interacts with TYROBP/DAP12. Interacts with TLR4.

It localises to the cell membrane. Functionally, cell surface receptor that plays important roles in innate and adaptive immunity by amplifying inflammatory responses. Upon activation by various ligands such as PGLYRP1, HMGB1 or HSP70, multimerizes and forms a complex with transmembrane adapter TYROBP/DAP12. In turn, initiates a SYK-mediated cascade of tyrosine phosphorylation, activating multiple downstream mediators such as BTK, MAPK1, MAPK3 or phospholipase C-gamma. This cascade promotes the neutrophil- and macrophage-mediated release of pro-inflammatory cytokines and/or chemokines, as well as their migration and thereby amplifies inflammatory responses that are triggered by bacterial and fungal infections. By also promoting the amplification of inflammatory signals that are initially triggered by Toll-like receptor (TLR) and NOD-like receptor engagement, plays a major role in the pathophysiology of acute and chronic inflammatory diseases of different etiologies including septic shock and atherosclerosis. The sequence is that of Triggering receptor expressed on myeloid cells 1 (TREM1) from Pongo abelii (Sumatran orangutan).